The sequence spans 378 residues: Chaperone protein DnaJ (378 aa).

A J domain is found at 5–70; it reads DYYEVLGVAK…QKRAAYDQYG (66 aa). The segment at 138 to 216 adopts a CR-type zinc-finger fold; that stretch reads GYDTQIRVPS…CHGSGKVKET (79 aa). Zn(2+)-binding residues include C151, C154, C168, C171, C190, C193, C204, and C207. 4 CXXCXGXG motif repeats span residues 151 to 158, 168 to 175, 190 to 197, and 204 to 211; these read CEVCHGSG, CPTCHGQG, CPKCHGTG, and CAHCHGSG.

This sequence belongs to the DnaJ family. In terms of assembly, homodimer. The cofactor is Zn(2+).

Its subcellular location is the cytoplasm. In terms of biological role, participates actively in the response to hyperosmotic and heat shock by preventing the aggregation of stress-denatured proteins and by disaggregating proteins, also in an autonomous, DnaK-independent fashion. Unfolded proteins bind initially to DnaJ; upon interaction with the DnaJ-bound protein, DnaK hydrolyzes its bound ATP, resulting in the formation of a stable complex. GrpE releases ADP from DnaK; ATP binding to DnaK triggers the release of the substrate protein, thus completing the reaction cycle. Several rounds of ATP-dependent interactions between DnaJ, DnaK and GrpE are required for fully efficient folding. Also involved, together with DnaK and GrpE, in the DNA replication of plasmids through activation of initiation proteins. The chain is Chaperone protein DnaJ from Burkholderia vietnamiensis (strain G4 / LMG 22486) (Burkholderia cepacia (strain R1808)).